A 121-amino-acid chain; its full sequence is Succinate dehydrogenase assembly factor 3, mitochondrial (121 aa).

A mitochondrion-targeting transit peptide spans 1–35 (MRPSLVRLVRPRRPERKTSPILPPLKLYKALLRAH).

The protein belongs to the complex I LYR family. SDHAF3 subfamily. Interacts with the iron-sulfur protein subunit within the SDH catalytic dimer.

Its subcellular location is the mitochondrion matrix. In terms of biological role, plays an essential role in the assembly of succinate dehydrogenase (SDH), an enzyme complex (also referred to as respiratory complex II) that is a component of both the tricarboxylic acid (TCA) cycle and the mitochondrial electron transport chain, and which couples the oxidation of succinate to fumarate with the reduction of ubiquinone (coenzyme Q) to ubiquinol. Promotes maturation of the iron-sulfur protein subunit of the SDH catalytic dimer, protecting it from the deleterious effects of oxidants. May act together with SDHAF1. The polypeptide is Succinate dehydrogenase assembly factor 3, mitochondrial (Debaryomyces hansenii (strain ATCC 36239 / CBS 767 / BCRC 21394 / JCM 1990 / NBRC 0083 / IGC 2968) (Yeast)).